The chain runs to 279 residues: Protein K1 (279 aa).

The N-terminal stretch at 1–18 (MFLYVVCSLAVCFRGLLS) is a signal peptide. Residues 19–220 (LSLQSSPNLC…TYLYIQEHLL (202 aa)) are Extracellular-facing. A helical transmembrane segment spans residues 221–241 (VFMTLVALIGTMCGILGTIIF). Residues 242-279 (AHCQKQRDSNKTVPQQLQDYYSLHDLCTEDYTQPVDWY) are Cytoplasmic-facing.

In terms of assembly, homooligomer.

The protein resides in the host membrane. Promotes host cell survival pathways and may contribute to pathogenesis by preventing infected cells from undergoing apoptosis. Acts in host B-cells by mimicking the activated B-cell receptor complex. The cytoplasmic tail of K1 can induce the phosphorylation of a number of different kinases, leading to the activation of survival signaling pathways. The polypeptide is Protein K1 (K1) (Human herpesvirus 8 type P (isolate GK18) (HHV-8)).